The chain runs to 725 residues: Homeobox protein unc-62 (725 aa).

Residues 133–218 (SSDVCSSASF…PLDIVGDERA (86 aa)) enclose the MEIS N-terminal domain. 6 disordered regions span residues 214 to 258 (GDER…PYEP), 295 to 317 (SSSSSQPQPGDHPLANGGTLHST), 329 to 359 (VSSPSTCSSGGLRQDSTPLSGETPMANGNSM), 386 to 419 (SLHQHHLHHPHHFPHHQLQPPAHHQDFLLPPPPQ), 491 to 555 (VKME…KRKV), and 615 to 661 (IDQN…PDPT). Residues 219–239 (SSSQPPMSPGSMGHHGHSGSP) are compositionally biased toward low complexity. The span at 388–400 (HQHHLHHPHHFPH) shows a compositional bias: basic residues. Over residues 498–508 (SVSSSKSGGKK) the composition is skewed to low complexity. The segment covering 541-550 (LSDSANGSQN) has biased composition (polar residues). The homeobox; TALE-type DNA-binding region spans 552-614 (KRKVPKVFSK…NARRRIVQPM (63 aa)).

It belongs to the TALE/MEIS homeobox family.

The protein localises to the nucleus. Functionally, acts redundantly with ceh-20 and ceh-40 to perform overlapping roles during embryogenesis. Required for postembryonic development of the ectoderm, including the Q, V and P cell lineages, playing a crucial role in ensuring that these cells and their descendants undergo their invariant patterns of cell division, migration, fusion and morphogenesis. Has a role in the mig-13 pathway to promote anterior migration of neuroblasts in the Q lineage. Required for multiple roles in regulating vulva development. In Caenorhabditis briggsae, this protein is Homeobox protein unc-62 (unc-62).